The primary structure comprises 213 residues: Putative manganese efflux pump MntP (213 aa).

The next 6 helical transmembrane spans lie at 3–23 (ILSIVLTGFGLAMDAFAVSVA), 36–56 (ALKVALFFGGFQALMPLIGWG), 67–87 (AFDHWIAFILLGFIGGKMIFE), 130–150 (LAIATSIDALAVGVSFAFLGI), 152–172 (IVQTIIIIGIITFVLCFLGVI), and 187–207 (IVGGVILILIGINILLEHTGI).

It belongs to the MntP (TC 9.B.29) family.

The protein resides in the cell membrane. Its function is as follows. Probably functions as a manganese efflux pump. This Clostridium perfringens (strain SM101 / Type A) protein is Putative manganese efflux pump MntP.